The primary structure comprises 291 residues: MKFVIVTGMSGAGKSTAMKMMEDMGYFCIDNLPIQLLDKLIDLSNTFHSDVSKVAVGIDVRNGSGIDAIPQTLEQLRQKNFPYEILFLDAEDEVLVKRYKETRRNHPLAGSERINKGIVLEREKLQYLKDNADYIIDTSQLLTRELKIELEKIFVQNEDYKNLFITILSFGFKYGIPSDSDIVMDVRFLPNPYYVDGLRAKTGNDKEIQDYVMQFPEANEFIDKLDDMIKFLIPNYISEGKNQLVISIGCTGGKHRSVTLANELYKRLSGCNDYGLKIEHRDIGKDALRGK.

8 to 15 provides a ligand contact to ATP; the sequence is GMSGAGKS. 59–62 serves as a coordination point for GTP; it reads DVRN.

It belongs to the RapZ-like family.

Functionally, displays ATPase and GTPase activities. The protein is Nucleotide-binding protein EUBREC_0697 of Agathobacter rectalis (strain ATCC 33656 / DSM 3377 / JCM 17463 / KCTC 5835 / VPI 0990) (Eubacterium rectale).